The following is a 253-amino-acid chain: Snake venom serine proteinase 14 (253 aa).

An N-terminal signal peptide occupies residues 1 to 18; sequence MVLIRVLANLLILQLSYA. Residues 19 to 24 constitute a propeptide that is removed on maturation; it reads QKSSEL. The Peptidase S1 domain maps to 25-244; it reads VIGGDECNIN…YTDWIQSIIA (220 aa). Intrachain disulfides connect Cys31/Cys158, Cys49/Cys65, Cys93/Cys251, Cys137/Cys205, Cys169/Cys184, and Cys195/Cys220. Active-site charge relay system residues include His64 and Asp105. 3 N-linked (GlcNAc...) asparagine glycosylation sites follow: Asn116, Asn117, and Asn149. Ser199 functions as the Charge relay system in the catalytic mechanism.

It belongs to the peptidase S1 family. Snake venom subfamily. Monomer. Expressed by the venom gland.

It is found in the secreted. Functionally, snake venom serine protease that may act in the hemostasis system of the prey. The protein is Snake venom serine proteinase 14 of Crotalus adamanteus (Eastern diamondback rattlesnake).